The chain runs to 510 residues: Bifunctional pantoate ligase/cytidylate kinase (510 aa).

Positions 1-276 (MKKVIIRKTE…CGETRLIDHV (276 aa)) are pantoate--beta-alanine ligase. 29–36 (MGNLHNGH) is a binding site for ATP. His-36 acts as the Proton donor in catalysis. Gln-61 lines the (R)-pantoate pocket. Gln-61 is a beta-alanine binding site. Residue 150 to 153 (GEKD) coordinates ATP. Gln-156 serves as a coordination point for (R)-pantoate. An ATP-binding site is contributed by 187-190 (LSSR). The cytidylate kinase stretch occupies residues 277–510 (FLMKRSPIIA…DKIPKETQIR (234 aa)).

This sequence in the N-terminal section; belongs to the pantothenate synthetase family. The protein in the C-terminal section; belongs to the cytidylate kinase family. Type 1 subfamily.

The protein localises to the cytoplasm. The enzyme catalyses (R)-pantoate + beta-alanine + ATP = (R)-pantothenate + AMP + diphosphate + H(+). It carries out the reaction CMP + ATP = CDP + ADP. It catalyses the reaction dCMP + ATP = dCDP + ADP. It functions in the pathway cofactor biosynthesis; (R)-pantothenate biosynthesis; (R)-pantothenate from (R)-pantoate and beta-alanine: step 1/1. Catalyzes the condensation of pantoate with beta-alanine in an ATP-dependent reaction via a pantoyl-adenylate intermediate. Functionally, catalyzes the transfer of a phosphate group from ATP to either CMP or dCMP to form CDP or dCDP and ADP, respectively. This is Bifunctional pantoate ligase/cytidylate kinase from Prochlorococcus marinus (strain MIT 9312).